Consider the following 385-residue polypeptide: Protein-glutamate methylesterase/protein-glutamine glutaminase (385 aa).

Residue Asp-53 is modified to 4-aspartylphosphate. Residues Lys-196–Ser-385 form the CheB-type methylesterase domain. Catalysis depends on residues Ser-208, His-234, and Asp-330.

The protein belongs to the CheB family. Post-translationally, phosphorylated by CheA. Phosphorylation of the N-terminal regulatory domain activates the methylesterase activity.

The protein resides in the cytoplasm. It catalyses the reaction [protein]-L-glutamate 5-O-methyl ester + H2O = L-glutamyl-[protein] + methanol + H(+). The enzyme catalyses L-glutaminyl-[protein] + H2O = L-glutamyl-[protein] + NH4(+). In terms of biological role, involved in chemotaxis. Part of a chemotaxis signal transduction system that modulates chemotaxis in response to various stimuli. Catalyzes the demethylation of specific methylglutamate residues introduced into the chemoreceptors (methyl-accepting chemotaxis proteins or MCP) by CheR. Also mediates the irreversible deamidation of specific glutamine residues to glutamic acid. The chain is Protein-glutamate methylesterase/protein-glutamine glutaminase from Borreliella burgdorferi (strain ATCC 35210 / DSM 4680 / CIP 102532 / B31) (Borrelia burgdorferi).